We begin with the raw amino-acid sequence, 426 residues long: MPGAGSRGPSAGDGRLRLARLALVLLGWVSASAPSSSVPSSSTSPAAFLASGSAQPPPAERCPAACECSEAARTVKCVNRNLLEVPADLPPYVRNLFLTGNQMTVLPAGAFARQPPLADLEALNLSGNHLKEVCAGAFEHLPGLRRLDLSHNPLTNLSAFAFAGSNASVSAPSPLEELILNHIVPPEDQRQNGSFEGMVAFEGMVAAALRSGLALRGLTRLELASNHFLFLPRDLLAQLPSLRYLDLRNNSLVSLTYASFRNLTHLESLHLEDNALKVLHNSTLAEWHGLAHVKVFLDNNPWVCDCYMADMVAWLKETEVVPDKARLTCAFPEKMRNRGLLDLNSSDLDCDAVLPQSLQTSYVFLGIVLALIGAIFLLVLYLNRKGIKKWMHNIRDACRDHMEGYHYRYEINADPRLTNLSSNSDV.

The signal sequence occupies residues methionine 1–alanine 31. Topologically, residues serine 32–serine 361 are extracellular. Positions alanine 33–alanine 47 are enriched in low complexity. The tract at residues alanine 33–serine 53 is disordered. One can recognise an LRRNT domain in the interval serine 53–proline 91. 2 disulfide bridges follow: cysteine 62-cysteine 68 and cysteine 66-cysteine 77. LRR repeat units follow at residues tyrosine 92–arginine 113, proline 116–glutamate 139, leucine 141–alanine 163, proline 172–arginine 210, leucine 215–glutamine 238, leucine 239–arginine 261, and asparagine 262–asparagine 281. N-linked (GlcNAc...) asparagine glycosylation occurs at asparagine 124. Asparagine 281 carries N-linked (GlcNAc...) asparagine glycosylation. One can recognise an LRRCT domain in the interval glycine 289–alanine 352. Cystine bridges form between cysteine 304/cysteine 329 and cysteine 306/cysteine 350. A helical transmembrane segment spans residues tyrosine 362–leucine 382. At asparagine 383–valine 426 the chain is on the cytoplasmic side. Serine 424 is subject to Phosphoserine.

Highly glycosylated. Highly expressed in embryo and placenta. In adult, expressed only in brain and ovary. Not detected in kidney small intestine, heart, spleen, testis, liver, lung, thymus and stomach.

The protein resides in the cell membrane. Its function is as follows. May function as an inhibitor of Wnt/beta-catenin signaling by indirectly interacting with LRP6 and blocking Wnt3a-dependent LRP6 internalization. This is Trophoblast glycoprotein (Tpbg) from Mus musculus (Mouse).